The following is a 226-amino-acid chain: Ribosome maturation factor RimP (226 aa).

The disordered stretch occupies residues 190–226 (VFPDTTRPQPGGKTGQRKKAQPKKPARGGAPHDDTTD). The segment covering 204 to 215 (GQRKKAQPKKPA) has biased composition (basic residues).

It belongs to the RimP family.

The protein resides in the cytoplasm. In terms of biological role, required for maturation of 30S ribosomal subunits. This Nitratidesulfovibrio vulgaris (strain DSM 19637 / Miyazaki F) (Desulfovibrio vulgaris) protein is Ribosome maturation factor RimP.